Consider the following 177-residue polypeptide: NEDD8-conjugating enzyme ubc12 (177 aa).

Residues 23-167 form the UBC core domain; sequence PAQIRIQKDV…VRTAMKGGLV (145 aa). C105 acts as the Glycyl thioester intermediate in catalysis.

This sequence belongs to the ubiquitin-conjugating enzyme family. UBC12 subfamily.

The enzyme catalyses [E1 NEDD8-activating enzyme]-S-[NEDD8 protein]-yl-L-cysteine + [E2 NEDD8-conjugating enzyme]-L-cysteine = [E1 NEDD8-activating enzyme]-L-cysteine + [E2 NEDD8-conjugating enzyme]-S-[NEDD8-protein]-yl-L-cysteine.. It functions in the pathway protein modification; protein neddylation. Functionally, accepts the ubiquitin-like protein NEDD8/RUB1 from the UBA3-ULA1 E1 complex and catalyzes its covalent attachment to other proteins. This is NEDD8-conjugating enzyme ubc12 (ubc12) from Schizosaccharomyces pombe (strain 972 / ATCC 24843) (Fission yeast).